Consider the following 194-residue polypeptide: Imidazoleglycerol-phosphate dehydratase (194 aa).

The protein belongs to the imidazoleglycerol-phosphate dehydratase family.

The protein resides in the cytoplasm. The enzyme catalyses D-erythro-1-(imidazol-4-yl)glycerol 3-phosphate = 3-(imidazol-4-yl)-2-oxopropyl phosphate + H2O. It participates in amino-acid biosynthesis; L-histidine biosynthesis; L-histidine from 5-phospho-alpha-D-ribose 1-diphosphate: step 6/9. In Lacticaseibacillus casei (strain BL23) (Lactobacillus casei), this protein is Imidazoleglycerol-phosphate dehydratase.